Reading from the N-terminus, the 266-residue chain is GTP cyclohydrolase FolE2 (266 aa).

Belongs to the GTP cyclohydrolase IV family.

It carries out the reaction GTP + H2O = 7,8-dihydroneopterin 3'-triphosphate + formate + H(+). Its pathway is cofactor biosynthesis; 7,8-dihydroneopterin triphosphate biosynthesis; 7,8-dihydroneopterin triphosphate from GTP: step 1/1. Its function is as follows. Converts GTP to 7,8-dihydroneopterin triphosphate. The chain is GTP cyclohydrolase FolE2 from Syntrophotalea carbinolica (strain DSM 2380 / NBRC 103641 / GraBd1) (Pelobacter carbinolicus).